Reading from the N-terminus, the 373-residue chain is Putative F-box/kelch-repeat protein At2g41360 (373 aa).

The F-box domain occupies 8–54; that stretch reads WSSLSCLPDEMVLNCLARVPRRYYENISCVSVRLRSLVRTPELYRMR. 2 Kelch repeats span residues 116–162 and 163–208; these read EIYF…VFDG and KIHV…MVSS.

The polypeptide is Putative F-box/kelch-repeat protein At2g41360 (Arabidopsis thaliana (Mouse-ear cress)).